The chain runs to 254 residues: 3-dehydroquinate dehydratase (254 aa).

3-dehydroquinate is bound by residues 47 to 49 (EWR) and Arg-83. His-144 acts as the Proton donor/acceptor in catalysis. Catalysis depends on Lys-171, which acts as the Schiff-base intermediate with substrate. Arg-214, Ser-233, and Gln-237 together coordinate 3-dehydroquinate.

It belongs to the type-I 3-dehydroquinase family. As to quaternary structure, homodimer.

It carries out the reaction 3-dehydroquinate = 3-dehydroshikimate + H2O. The protein operates within metabolic intermediate biosynthesis; chorismate biosynthesis; chorismate from D-erythrose 4-phosphate and phosphoenolpyruvate: step 3/7. In terms of biological role, involved in the third step of the chorismate pathway, which leads to the biosynthesis of aromatic amino acids. Catalyzes the cis-dehydration of 3-dehydroquinate (DHQ) and introduces the first double bond of the aromatic ring to yield 3-dehydroshikimate. In Clostridium botulinum (strain Eklund 17B / Type B), this protein is 3-dehydroquinate dehydratase.